Here is a 251-residue protein sequence, read N- to C-terminus: Isoprenyl transferase (251 aa).

The active site involves D31. D31 contributes to the Mg(2+) binding site. Substrate contacts are provided by residues 32 to 35 (GNGR), W36, R44, H48, and 76 to 78 (STE). The active-site Proton acceptor is the N79. Residues W80, R82, R199, and 205–207 (RIS) each bind substrate. Residue E218 participates in Mg(2+) binding.

Belongs to the UPP synthase family. Homodimer. It depends on Mg(2+) as a cofactor.

Its function is as follows. Catalyzes the condensation of isopentenyl diphosphate (IPP) with allylic pyrophosphates generating different type of terpenoids. This is Isoprenyl transferase from Thermosynechococcus vestitus (strain NIES-2133 / IAM M-273 / BP-1).